The primary structure comprises 445 residues: Glycine--tRNA ligase (445 aa).

Substrate is bound by residues Lys-97 and Glu-145. Residues 177–179 (RNE), 187–192 (FRTCEF), 262–263 (EI), and 308–311 (GLTR) contribute to the ATP site. A substrate-binding site is contributed by 192-196 (FEQME). Residue 304-308 (ETSLG) coordinates substrate.

Belongs to the class-II aminoacyl-tRNA synthetase family. As to quaternary structure, homodimer.

The protein localises to the cytoplasm. It catalyses the reaction tRNA(Gly) + glycine + ATP = glycyl-tRNA(Gly) + AMP + diphosphate. Catalyzes the attachment of glycine to tRNA(Gly). The polypeptide is Glycine--tRNA ligase (Borrelia hermsii (strain HS1 / DAH)).